The chain runs to 73 residues: Large ribosomal subunit protein bL27c (73 aa).

It belongs to the bacterial ribosomal protein bL27 family.

Its subcellular location is the plastid. It is found in the chloroplast. The sequence is that of Large ribosomal subunit protein bL27c (rpl27) from Haptolina hirta (Plankton alga).